The following is a 318-amino-acid chain: Bis(5'-nucleosyl)-tetraphosphatase, symmetrical (318 aa).

The segment at 269–318 (PGREVTGPAPVARAPRRPRERLGRQRSRGNRGNAGNTAVPAKPQVDTPQD) is disordered. Positions 282-297 (APRRPRERLGRQRSRG) are enriched in basic residues.

It belongs to the Ap4A hydrolase family.

The catalysed reaction is P(1),P(4)-bis(5'-adenosyl) tetraphosphate + H2O = 2 ADP + 2 H(+). Functionally, hydrolyzes diadenosine 5',5'''-P1,P4-tetraphosphate to yield ADP. The sequence is that of Bis(5'-nucleosyl)-tetraphosphatase, symmetrical from Xanthomonas oryzae pv. oryzae (strain KACC10331 / KXO85).